A 320-amino-acid polypeptide reads, in one-letter code: Eukaryotic translation initiation factor 3 subunit G (320 aa).

A disordered region spans residues 1-25; sequence MPTGDFDSKPSWADQVEEEGEDDKC. 2 positions are modified to phosphoserine: Ser-8 and Ser-11. Phosphothreonine occurs at positions 38 and 41. A phosphoserine mark is found at Ser-42, Ser-189, Ser-223, and Ser-264. The tract at residues 209-234 is disordered; that stretch reads KTGKYVPPSLRDGASRRGESMQPNRR. Positions 221–234 are enriched in basic and acidic residues; sequence GASRRGESMQPNRR. One can recognise an RRM domain in the interval 239–317; the sequence is ATIRVTNLSE…LILNVEWAKP (79 aa).

The protein belongs to the eIF-3 subunit G family. As to quaternary structure, component of the eukaryotic translation initiation factor 3 (eIF-3) complex, which is composed of 13 subunits: EIF3A, EIF3B, EIF3C, EIF3D, EIF3E, EIF3F, EIF3G, EIF3H, EIF3I, EIF3J, EIF3K, EIF3L and EIF3M. The eIF-3 complex appears to include 3 stable modules: module A is composed of EIF3A, EIF3B, EIF3G and EIF3I; module B is composed of EIF3F, EIF3H, and EIF3M; and module C is composed of EIF3C, EIF3D, EIF3E, EIF3K and EIF3L. EIF3C of module C binds EIF3B of module A and EIF3H of module B, thereby linking the three modules. EIF3J is a labile subunit that binds to the eIF-3 complex via EIF3B. The eIF-3 complex interacts with RPS6KB1 under conditions of nutrient depletion. Mitogenic stimulation leads to binding and activation of a complex composed of FRAP1 and RAPTOR, leading to phosphorylation and release of RPS6KB1 and binding of EIF4B to eIF-3. Interacts (via C-terminus) with AIFM1 (via N-terminus). Interacts with DHX33; the interaction is independent of RNA. In terms of processing, phosphorylated. Phosphorylation is enhanced upon serum stimulation.

It is found in the cytoplasm. The protein localises to the nucleus. Its subcellular location is the perinuclear region. Functionally, RNA-binding component of the eukaryotic translation initiation factor 3 (eIF-3) complex, which is required for several steps in the initiation of protein synthesis. The eIF-3 complex associates with the 40S ribosome and facilitates the recruitment of eIF-1, eIF-1A, eIF-2:GTP:methionyl-tRNAi and eIF-5 to form the 43S pre-initiation complex (43S PIC). The eIF-3 complex stimulates mRNA recruitment to the 43S PIC and scanning of the mRNA for AUG recognition. The eIF-3 complex is also required for disassembly and recycling of post-termination ribosomal complexes and subsequently prevents premature joining of the 40S and 60S ribosomal subunits prior to initiation. The eIF-3 complex specifically targets and initiates translation of a subset of mRNAs involved in cell proliferation, including cell cycling, differentiation and apoptosis, and uses different modes of RNA stem-loop binding to exert either translational activation or repression. This subunit can bind 18S rRNA. The protein is Eukaryotic translation initiation factor 3 subunit G of Bos taurus (Bovine).